The primary structure comprises 266 residues: Signal peptidase I (266 aa).

Residues 1–20 (MQTDNTKSNTNKTAKQEWWS) lie on the Cytoplasmic side of the membrane. A helical membrane pass occupies residues 21 to 41 (CAFVICIALLIRILIMEPFTV). Over 42 to 266 (PTGSMKATIL…IFRNLYNTDE (225 aa)) the chain is Periplasmic. Active-site residues include Ser45 and Lys108.

The protein belongs to the peptidase S26 family.

Its subcellular location is the cell inner membrane. The enzyme catalyses Cleavage of hydrophobic, N-terminal signal or leader sequences from secreted and periplasmic proteins.. The sequence is that of Signal peptidase I (lepB) from Rickettsia akari (strain Hartford).